Consider the following 542-residue polypeptide: Cytochrome P450 monooxygenase 91 (542 aa).

The N-terminal stretch at 1–22 is a signal peptide; the sequence is MLDILRFVLICGILWILRRVLL. Residues asparagine 299 and asparagine 392 are each glycosylated (N-linked (GlcNAc...) asparagine). Cysteine 482 contacts heme.

This sequence belongs to the cytochrome P450 family. Heme serves as cofactor.

The protein operates within secondary metabolite biosynthesis. Cytochrome P450 monooxygenase that is able to use dehydroabietic acid as a substrate for oxidation. This Postia placenta (strain ATCC 44394 / Madison 698-R) (Brown rot fungus) protein is Cytochrome P450 monooxygenase 91.